Reading from the N-terminus, the 463-residue chain is MIPVTSFKGRKVALFGLGGSGLATAQALVSGGADVVAWDDNPDSVAKAAAAGIATADLRGADWHAFAAFVLSPGVPLTHPKPHWSVDLAHQAGVEIIGDVELFVRERRKHAPDCPFIAITGTNGKSTTTALIAHILRTSGRDTQLGGNIGTAVLTLDPPKAGRFYVVECSSYQIDLAPTLDPTAGILLNLTPDHLDRHGTMQHYADIKERLVAGSGTAVVGVDDSLSSLIADRVERAGTKVVRISRRHPLAEGIYAEGSALMRAQDGASSLFTDLAGIQTLRGGHNAQNAAAAIAACLAVGISGKDIVDGLRSFPGLKHRMQPVAKKGEVVFVNDSKATNAEAAAPALSSYDRIYWIAGGLPKEGGITSLAPFFPKIVKAYLIGEAAPSFAATLGEAVPYEISGTLEKAVAHAAADAARDSQGPAAVMLSPACASFDQYKNFEVRGDAFVGHVAALEGVSMLI.

An ATP-binding site is contributed by 121–127; that stretch reads GTNGKST.

This sequence belongs to the MurCDEF family.

The protein resides in the cytoplasm. The enzyme catalyses UDP-N-acetyl-alpha-D-muramoyl-L-alanine + D-glutamate + ATP = UDP-N-acetyl-alpha-D-muramoyl-L-alanyl-D-glutamate + ADP + phosphate + H(+). The protein operates within cell wall biogenesis; peptidoglycan biosynthesis. Cell wall formation. Catalyzes the addition of glutamate to the nucleotide precursor UDP-N-acetylmuramoyl-L-alanine (UMA). This chain is UDP-N-acetylmuramoylalanine--D-glutamate ligase (murD), found in Rhizobium meliloti (strain 1021) (Ensifer meliloti).